A 347-amino-acid polypeptide reads, in one-letter code: Ribosomal RNA small subunit methyltransferase H (347 aa).

Residues 47-49 (GGY), aspartate 64, phenylalanine 91, aspartate 114, and glutamine 121 contribute to the S-adenosyl-L-methionine site. A disordered region spans residues 291-347 (PAVKGAVGPTAEEEERNPRARSAKLRAGIRTENPPLEDDLSLFGLPKLPETNELARS).

Belongs to the methyltransferase superfamily. RsmH family.

The protein localises to the cytoplasm. The catalysed reaction is cytidine(1402) in 16S rRNA + S-adenosyl-L-methionine = N(4)-methylcytidine(1402) in 16S rRNA + S-adenosyl-L-homocysteine + H(+). In terms of biological role, specifically methylates the N4 position of cytidine in position 1402 (C1402) of 16S rRNA. This chain is Ribosomal RNA small subunit methyltransferase H, found in Brucella anthropi (strain ATCC 49188 / DSM 6882 / CCUG 24695 / JCM 21032 / LMG 3331 / NBRC 15819 / NCTC 12168 / Alc 37) (Ochrobactrum anthropi).